The sequence spans 155 residues: MASRSAGSLITHNNVTYIPPALMPGYRGHVPTASFTYGDTYGNTSARCFQDFRSTVLNSSRSPYCQGGQFPTSHSNDPALVIGHRSRGWDRFLHSPSWSRYNVDFKRSDELKQFHRAAEQHRDHYRDKSGTAHQVPHFIIPVKNPQTFPLPQQVL.

Belongs to the CIMIP2 family.

The protein localises to the cytoplasm. The protein resides in the cytoskeleton. It is found in the cilium axoneme. In terms of biological role, microtubule inner protein (MIP) part of the dynein-decorated doublet microtubules (DMTs) in cilia axoneme, which is required for motile cilia beating. The protein is Ciliary microtubule inner protein 2C (cimip2ca) of Xenopus laevis (African clawed frog).